The sequence spans 339 residues: Uroporphyrinogen decarboxylase (339 aa).

Substrate is bound by residues 23–27 (RQAGR), aspartate 72, tyrosine 147, threonine 202, and histidine 315.

Belongs to the uroporphyrinogen decarboxylase family. Homodimer.

It localises to the cytoplasm. It catalyses the reaction uroporphyrinogen III + 4 H(+) = coproporphyrinogen III + 4 CO2. The protein operates within porphyrin-containing compound metabolism; protoporphyrin-IX biosynthesis; coproporphyrinogen-III from 5-aminolevulinate: step 4/4. Its function is as follows. Catalyzes the decarboxylation of four acetate groups of uroporphyrinogen-III to yield coproporphyrinogen-III. The protein is Uroporphyrinogen decarboxylase of Geobacter sp. (strain M21).